The following is a 793-amino-acid chain: Copalyl diphosphate synthase CPS1, chloroplastic (793 aa).

Residues 1–59 (MASLSSTILSRSPAARRRITPASAKLHRPECFATSAWMGSSSKNLSLSYQLNHKKISVA) constitute a chloroplast transit peptide. Substrate is bound at residue lysine 238. Mg(2+)-binding residues include aspartate 370 and aspartate 372. The short motif at 370–373 (DIDD) is the DXDD motif element. Lysine 457 provides a ligand contact to substrate.

It belongs to the terpene synthase family. Mg(2+) serves as cofactor.

Its subcellular location is the plastid. It localises to the chloroplast. The enzyme catalyses (2E,6E,10E)-geranylgeranyl diphosphate = (+)-copalyl diphosphate. The protein operates within secondary metabolite biosynthesis; terpenoid biosynthesis. Functionally, involved in tanshinone biosynthesis in hairy roots. Catalyzes the conversion of geranylgeranyl diphosphate (GGPP) to copalyl diphosphate (CPP). The polypeptide is Copalyl diphosphate synthase CPS1, chloroplastic (Salvia miltiorrhiza (Chinese sage)).